A 65-amino-acid chain; its full sequence is Weak neurotoxin 8 (65 aa).

Intrachain disulfides connect Cys-3–Cys-24, Cys-6–Cys-11, Cys-17–Cys-42, Cys-46–Cys-57, and Cys-58–Cys-63.

Belongs to the three-finger toxin family. Ancestral subfamily. Orphan group II sub-subfamily. Expressed by the venom gland.

Its subcellular location is the secreted. Binds with low affinity to muscular (alpha-1-beta-1-delta-epsilon/CHRNA1-CHRNB1-CHRND-CHRNE) and very low affinity to neuronal (alpha-7/CHRNA7) nicotinic acetylcholine receptor (nAChR). In Naja naja (Indian cobra), this protein is Weak neurotoxin 8.